Here is a 347-residue protein sequence, read N- to C-terminus: D-fructose 1,6-bisphosphatase class 2/sedoheptulose 1,7-bisphosphatase (347 aa).

4 residues coordinate Mn(2+): D33, E57, D97, and E100. Substrate is bound by residues 100–102, Y131, 176–178, and 198–200; these read EGT, RDR, and DGD. Mn(2+) is bound at residue E225.

Belongs to the FBPase class 2 family. Homotetramer. Mn(2+) is required as a cofactor.

The enzyme catalyses beta-D-fructose 1,6-bisphosphate + H2O = beta-D-fructose 6-phosphate + phosphate. The catalysed reaction is D-sedoheptulose 1,7-bisphosphate + H2O = D-sedoheptulose 7-phosphate + phosphate. It functions in the pathway carbohydrate biosynthesis; Calvin cycle. Functionally, catalyzes the hydrolysis of fructose 1,6-bisphosphate (Fru 1,6-P2) and sedoheptulose 1,7-bisphosphate (Sed 1,7-P2) to fructose 6-phosphate and sedoheptulose 7-phosphate, respectively. This is D-fructose 1,6-bisphosphatase class 2/sedoheptulose 1,7-bisphosphatase from Thermosynechococcus vestitus (strain NIES-2133 / IAM M-273 / BP-1).